Here is a 90-residue protein sequence, read N- to C-terminus: uncharacterized protein (90 aa).

An Isoglutamyl lysine isopeptide (Lys-Gln) (interchain with Q-Cter in protein Pup) cross-link involves residue Lys-88.

This is an uncharacterized protein from Mycolicibacterium smegmatis (strain ATCC 700084 / mc(2)155) (Mycobacterium smegmatis).